Here is a 682-residue protein sequence, read N- to C-terminus: Methionine--tRNA ligase (682 aa).

Residues 15–25 (PYANGAIHLGH) carry the 'HIGH' region motif. Zn(2+) is bound by residues cysteine 146, cysteine 149, cysteine 159, and cysteine 162. The 'KMSKS' region signature appears at 331–335 (KMSKS). Lysine 334 contacts ATP. A tRNA-binding domain is found at 580–682 (DLAKLDMRVA…NGVTAGMQVK (103 aa)).

This sequence belongs to the class-I aminoacyl-tRNA synthetase family. MetG type 1 subfamily. Homodimer. It depends on Zn(2+) as a cofactor.

The protein localises to the cytoplasm. It carries out the reaction tRNA(Met) + L-methionine + ATP = L-methionyl-tRNA(Met) + AMP + diphosphate. Is required not only for elongation of protein synthesis but also for the initiation of all mRNA translation through initiator tRNA(fMet) aminoacylation. The protein is Methionine--tRNA ligase of Haemophilus influenzae (strain 86-028NP).